Here is a 270-residue protein sequence, read N- to C-terminus: 4-hydroxy-tetrahydrodipicolinate reductase (270 aa).

Residues 8–13, Asp-34, 102–104, and 128–131 contribute to the NAD(+) site; these read GALGRM, GTT, and SQNY. Residue His-160 is the Proton donor/acceptor of the active site. His-161 lines the (S)-2,3,4,5-tetrahydrodipicolinate pocket. The active-site Proton donor is Lys-164. 170–171 is a binding site for (S)-2,3,4,5-tetrahydrodipicolinate; the sequence is GT.

This sequence belongs to the DapB family.

The protein resides in the cytoplasm. It carries out the reaction (S)-2,3,4,5-tetrahydrodipicolinate + NAD(+) + H2O = (2S,4S)-4-hydroxy-2,3,4,5-tetrahydrodipicolinate + NADH + H(+). The catalysed reaction is (S)-2,3,4,5-tetrahydrodipicolinate + NADP(+) + H2O = (2S,4S)-4-hydroxy-2,3,4,5-tetrahydrodipicolinate + NADPH + H(+). The protein operates within amino-acid biosynthesis; L-lysine biosynthesis via DAP pathway; (S)-tetrahydrodipicolinate from L-aspartate: step 4/4. Catalyzes the conversion of 4-hydroxy-tetrahydrodipicolinate (HTPA) to tetrahydrodipicolinate. This chain is 4-hydroxy-tetrahydrodipicolinate reductase, found in Methanococcus maripaludis (strain C6 / ATCC BAA-1332).